The primary structure comprises 844 residues: RING finger containing E3 ubiquitin-protein ligase WSV222 (844 aa).

Residue 229-236 (AEDDKGKT) participates in ATP binding. The segment at 308–359 (CGVCATSVEEDENEGKTTSLSWYQMNCKHYIHCECLMGMCAAAGNVQCPMCR) adopts an RING-type; atypical zinc-finger fold.

In terms of assembly, interacts with host UBE2E1/UBCH6; this interaction results in WSV222 auto-ubiquitination. Interacts with host tumor suppressor-like protein.

The enzyme catalyses S-ubiquitinyl-[E2 ubiquitin-conjugating enzyme]-L-cysteine + [acceptor protein]-L-lysine = [E2 ubiquitin-conjugating enzyme]-L-cysteine + N(6)-ubiquitinyl-[acceptor protein]-L-lysine.. It functions in the pathway protein modification; protein ubiquitination. In terms of biological role, probable E3 ubiquitin-protein ligase which accepts ubiquitin from the E2 ubiquitin-conjugating enzyme UBE2E1/UBCH6 in the form of a thioester and then directly transfers the ubiquitin to targeted substrates. Mediates ubiquitination of host tumor-suppressor-like protein (TSL) targeting it for degradation. Might function as an anti-apoptosis protein by counteracting TSL-induced apoptosis. In White spot syndrome virus (isolate Shrimp/China/Tongan/1996) (WSSV), this protein is RING finger containing E3 ubiquitin-protein ligase WSV222.